Here is a 706-residue protein sequence, read N- to C-terminus: Probable serine/threonine-protein kinase zyg-1 (706 aa).

The region spanning 13-249 (YSHLKEIGKG…LTQIVLSEFM (237 aa)) is the Protein kinase domain. ATP contacts are provided by residues 19-27 (IGKGGFGVV) and Lys-41. Asp-131 acts as the Proton acceptor in catalysis. Basic and acidic residues-rich tracts occupy residues 261 to 290 (SREHSRDGRRQRSREPVRSSRDDRSRDGRA) and 323 to 336 (FDSERGRERDRDSG). Disordered regions lie at residues 261-351 (SREH…NRSQ) and 566-632 (SPSS…VAPS). Low complexity predominate over residues 566–579 (SPSSLMPSGSSQTS). 2 stretches are compositionally biased toward polar residues: residues 580–592 (RFPFSNLSNNQPS) and 603–629 (KPTSSQRASSANVQRRVSTDENSSPSV).

The protein belongs to the protein kinase superfamily. Ser/Thr protein kinase family. Interacts with sel-10. In terms of processing, probably ubiquitinated by the SCF(sel-10) and SCF(lin-23) E3 ubiquitin ligase complexes, leading to its proteasomal degradation.

It localises to the cytoplasm. The protein resides in the cytoskeleton. The protein localises to the microtubule organizing center. Its subcellular location is the centrosome. It is found in the centriole. It carries out the reaction L-seryl-[protein] + ATP = O-phospho-L-seryl-[protein] + ADP + H(+). The catalysed reaction is L-threonyl-[protein] + ATP = O-phospho-L-threonyl-[protein] + ADP + H(+). Its function is as follows. Protein kinase that plays a central role in centrosome duplication, control of centrosome size, spindle formation and nuclear envelope breakdown during cell divisions. Paternal copy is required to regulate synthesis of daughter centrioles prior to fertilization. Maternal copy regulates centrosome duplication during later cell cycles. Functions upstream of sas-5 and sas-6, and is required for their localization to the centrosome. Its role in nuclear envelope breakdown is mediated by the spindly-like protein spdl-1 and the RZZ complex, which in turn recruits the spindle checkpoint proteins mdf-1 and mdf-2, dynein and dynactin to unattached kinetochores. This Caenorhabditis elegans protein is Probable serine/threonine-protein kinase zyg-1.